Consider the following 630-residue polypeptide: Replication protein A 70 kDa DNA-binding subunit B (630 aa).

The OB DNA-binding region spans 200-282 (IIKVRVTSKG…KTVHNDYEMT (83 aa)). The segment at 496–516 (CKTCNKKVTEAIGSGYWCEGC) adopts a C4-type zinc-finger fold.

It belongs to the replication factor A protein 1 family. Heterotrimer of RPA1, RPA2 and RPA3 (canonical replication protein A complex). Interacts with RPA2A. In terms of tissue distribution, expressed in root tips, roots, shoot apical meristem (SAM) and young leaves, and at lower levels in mature leaves, flag leaves and ears.

The protein resides in the nucleus. Component of the replication protein A complex (RPA) required for DNA recombination, repair and replication. The activity of RPA is mediated by single-stranded DNA binding and protein interactions. Probably involved in repair of double-strand DNA breaks (DSBs) induced by genotoxic stresses. The protein is Replication protein A 70 kDa DNA-binding subunit B (RPA1B) of Oryza sativa subsp. japonica (Rice).